We begin with the raw amino-acid sequence, 677 residues long: Methionine--tRNA ligase (677 aa).

A 'HIGH' region motif is present at residues 15–25 (PYANGSIHLGH). Residues Cys146, Cys149, Cys159, and Cys162 each contribute to the Zn(2+) site. The 'KMSKS' region signature appears at 333-337 (KMSKS). Position 336 (Lys336) interacts with ATP. In terms of domain architecture, tRNA-binding spans 575–677 (DFAKIDLRVA…DGAKPGQQVK (103 aa)).

Belongs to the class-I aminoacyl-tRNA synthetase family. MetG type 1 subfamily. As to quaternary structure, homodimer. Zn(2+) serves as cofactor.

The protein resides in the cytoplasm. It catalyses the reaction tRNA(Met) + L-methionine + ATP = L-methionyl-tRNA(Met) + AMP + diphosphate. In terms of biological role, is required not only for elongation of protein synthesis but also for the initiation of all mRNA translation through initiator tRNA(fMet) aminoacylation. The sequence is that of Methionine--tRNA ligase from Salmonella paratyphi A (strain AKU_12601).